The following is a 423-amino-acid chain: Gamma-glutamyl phosphate reductase (423 aa).

It belongs to the gamma-glutamyl phosphate reductase family.

It is found in the cytoplasm. It catalyses the reaction L-glutamate 5-semialdehyde + phosphate + NADP(+) = L-glutamyl 5-phosphate + NADPH + H(+). It participates in amino-acid biosynthesis; L-proline biosynthesis; L-glutamate 5-semialdehyde from L-glutamate: step 2/2. Its function is as follows. Catalyzes the NADPH-dependent reduction of L-glutamate 5-phosphate into L-glutamate 5-semialdehyde and phosphate. The product spontaneously undergoes cyclization to form 1-pyrroline-5-carboxylate. The chain is Gamma-glutamyl phosphate reductase from Paraburkholderia phytofirmans (strain DSM 17436 / LMG 22146 / PsJN) (Burkholderia phytofirmans).